A 785-amino-acid polypeptide reads, in one-letter code: Endonuclease MutS2 (785 aa).

335–342 serves as a coordination point for ATP; that stretch reads GPNTGGKT. Residues 710-785 enclose the Smr domain; it reads LDLRGERYED…GNGVTIVEFK (76 aa).

This sequence belongs to the DNA mismatch repair MutS family. MutS2 subfamily. In terms of assembly, homodimer. Binds to stalled ribosomes, contacting rRNA.

Its function is as follows. Endonuclease that is involved in the suppression of homologous recombination and thus may have a key role in the control of bacterial genetic diversity. Acts as a ribosome collision sensor, splitting the ribosome into its 2 subunits. Detects stalled/collided 70S ribosomes which it binds and splits by an ATP-hydrolysis driven conformational change. Acts upstream of the ribosome quality control system (RQC), a ribosome-associated complex that mediates the extraction of incompletely synthesized nascent chains from stalled ribosomes and their subsequent degradation. Probably generates substrates for RQC. The chain is Endonuclease MutS2 from Listeria monocytogenes serovar 1/2a (strain ATCC BAA-679 / EGD-e).